A 416-amino-acid polypeptide reads, in one-letter code: 4-hydroxy-3-methylbut-2-en-1-yl diphosphate synthase (flavodoxin) (416 aa).

Residues Cys-304, Cys-307, Cys-350, and Glu-357 each coordinate [4Fe-4S] cluster.

This sequence belongs to the IspG family. [4Fe-4S] cluster serves as cofactor.

It catalyses the reaction (2E)-4-hydroxy-3-methylbut-2-enyl diphosphate + oxidized [flavodoxin] + H2O + 2 H(+) = 2-C-methyl-D-erythritol 2,4-cyclic diphosphate + reduced [flavodoxin]. It participates in isoprenoid biosynthesis; isopentenyl diphosphate biosynthesis via DXP pathway; isopentenyl diphosphate from 1-deoxy-D-xylulose 5-phosphate: step 5/6. Its function is as follows. Converts 2C-methyl-D-erythritol 2,4-cyclodiphosphate (ME-2,4cPP) into 1-hydroxy-2-methyl-2-(E)-butenyl 4-diphosphate. In Burkholderia pseudomallei (strain K96243), this protein is 4-hydroxy-3-methylbut-2-en-1-yl diphosphate synthase (flavodoxin).